The primary structure comprises 499 residues: Putative alpha-galactosidase 8 (499 aa).

Asn-154 and Asn-191 each carry an N-linked (GlcNAc...) asparagine glycan. Catalysis depends on Asp-238, which acts as the Nucleophile. A glycan (N-linked (GlcNAc...) asparagine) is linked at Asn-256. Asp-303 serves as the catalytic Proton donor.

The protein belongs to the glycosyl hydrolase 27 family.

It localises to the secreted. The catalysed reaction is Hydrolysis of terminal, non-reducing alpha-D-galactose residues in alpha-D-galactosides, including galactose oligosaccharides, galactomannans and galactolipids.. In terms of biological role, putative alpha-galactosidase involved in the degradation of simple oligosaccharides like melibiose, raffinose and stachyose, and of polymeric galacto(gluco)mannans. This chain is Putative alpha-galactosidase 8 (agl8), found in Emericella nidulans (strain FGSC A4 / ATCC 38163 / CBS 112.46 / NRRL 194 / M139) (Aspergillus nidulans).